Reading from the N-terminus, the 107-residue chain is UPF0145 protein YbjQ (107 aa).

It belongs to the UPF0145 family.

The chain is UPF0145 protein YbjQ from Escherichia coli (strain SMS-3-5 / SECEC).